The primary structure comprises 193 residues: Peptidyl-tRNA hydrolase (193 aa).

Position 17 (Tyr-17) interacts with tRNA. Catalysis depends on His-22, which acts as the Proton acceptor. TRNA-binding residues include Phe-68, Asn-70, and Asn-116.

It belongs to the PTH family. In terms of assembly, monomer.

The protein resides in the cytoplasm. The catalysed reaction is an N-acyl-L-alpha-aminoacyl-tRNA + H2O = an N-acyl-L-amino acid + a tRNA + H(+). Functionally, hydrolyzes ribosome-free peptidyl-tRNAs (with 1 or more amino acids incorporated), which drop off the ribosome during protein synthesis, or as a result of ribosome stalling. Its function is as follows. Catalyzes the release of premature peptidyl moieties from peptidyl-tRNA molecules trapped in stalled 50S ribosomal subunits, and thus maintains levels of free tRNAs and 50S ribosomes. This chain is Peptidyl-tRNA hydrolase, found in Acinetobacter baylyi (strain ATCC 33305 / BD413 / ADP1).